Here is a 117-residue protein sequence, read N- to C-terminus: Ribonuclease P protein component (117 aa).

This sequence belongs to the RnpA family. In terms of assembly, consists of a catalytic RNA component (M1 or rnpB) and a protein subunit.

The catalysed reaction is Endonucleolytic cleavage of RNA, removing 5'-extranucleotides from tRNA precursor.. In terms of biological role, RNaseP catalyzes the removal of the 5'-leader sequence from pre-tRNA to produce the mature 5'-terminus. It can also cleave other RNA substrates such as 4.5S RNA. The protein component plays an auxiliary but essential role in vivo by binding to the 5'-leader sequence and broadening the substrate specificity of the ribozyme. This chain is Ribonuclease P protein component, found in Thermotoga maritima (strain ATCC 43589 / DSM 3109 / JCM 10099 / NBRC 100826 / MSB8).